We begin with the raw amino-acid sequence, 259 residues long: Protein unc-50 homolog (259 aa).

Residues 1 to 15 show a composition bias toward polar residues; it reads MLPTSSPQIHRNGSL. The tract at residues 1–22 is disordered; sequence MLPTSSPQIHRNGSLSERDAAR. Residues 1–80 lie on the Cytoplasmic side of the membrane; that stretch reads MLPTSSPQIH…TKDQWARDDP (80 aa). The helical transmembrane segment at 81 to 101 threads the bilayer; that stretch reads AFLVLLSIWLCVSTVGFGLVL. At 102–110 the chain is on the lumenal side; it reads DMGFVETLT. Residues 111–131 traverse the membrane as a helical segment; it reads LLLWVVFIDCIGVGLLISTLM. Topologically, residues 132–162 are cytoplasmic; the sequence is WFVTNKYLMKHPNRDYDVEWGYAFDVHLNAF. Residues 163–183 traverse the membrane as a helical segment; that stretch reads YPLLVILHFLQLFFINHVVVI. The Lumenal segment spans residues 184–198; it reads SSDWFLGYFVGNTMW. Residues 199–219 form a helical membrane-spanning segment; it reads LIAIGYYVYITFLGYSALPFL. At 220 to 222 the chain is on the cytoplasmic side; sequence KNT. Residues 223–243 traverse the membrane as a helical segment; it reads VVLLYPFALLGLLYVLSISLG. Over 244-259 the chain is Lumenal; sequence WNFTKGLCWFYKHRVQ.

Belongs to the unc-50 family.

It is found in the nucleus inner membrane. The protein localises to the golgi apparatus membrane. Its function is as follows. Involved in the cell surface expression of neuronal nicotinic receptors. Binds RNA. The polypeptide is Protein unc-50 homolog (unc50) (Danio rerio (Zebrafish)).